A 297-amino-acid chain; its full sequence is Phosphoribosylaminoimidazole-succinocarboxamide synthase (297 aa).

The protein belongs to the SAICAR synthetase family.

The catalysed reaction is 5-amino-1-(5-phospho-D-ribosyl)imidazole-4-carboxylate + L-aspartate + ATP = (2S)-2-[5-amino-1-(5-phospho-beta-D-ribosyl)imidazole-4-carboxamido]succinate + ADP + phosphate + 2 H(+). It functions in the pathway purine metabolism; IMP biosynthesis via de novo pathway; 5-amino-1-(5-phospho-D-ribosyl)imidazole-4-carboxamide from 5-amino-1-(5-phospho-D-ribosyl)imidazole-4-carboxylate: step 1/2. This chain is Phosphoribosylaminoimidazole-succinocarboxamide synthase, found in Mycobacterium ulcerans (strain Agy99).